Consider the following 152-residue polypeptide: SFSGATTLMIAHGLTSSMYFCLANSNYERTHNRTMLLSRGLQILLPLTAFWWLTASLTNLALPPTINLLGELFVITTSFSWSHITIVLTGLNMLITALYSLHMFITVQRGTLTHHMINMKPPFTRENMLMFMHLAPIILLSLNPNIILGFTS.

4 helical membrane passes run 2-22 (FSGA…YFCL), 43-63 (ILLP…LALP), 84-104 (ITIV…LHMF), and 128-148 (MLMF…NIIL).

The protein belongs to the complex I subunit 4 family.

It is found in the mitochondrion membrane. The enzyme catalyses a ubiquinone + NADH + 5 H(+)(in) = a ubiquinol + NAD(+) + 4 H(+)(out). Core subunit of the mitochondrial membrane respiratory chain NADH dehydrogenase (Complex I) that is believed to belong to the minimal assembly required for catalysis. Complex I functions in the transfer of electrons from NADH to the respiratory chain. The immediate electron acceptor for the enzyme is believed to be ubiquinone. The sequence is that of NADH-ubiquinone oxidoreductase chain 4 (MT-ND4) from Macaca fascicularis (Crab-eating macaque).